The chain runs to 341 residues: tRNA N6-adenosine threonylcarbamoyltransferase (341 aa).

2 residues coordinate Fe cation: His-111 and His-115. Residues 134–138 (LVSGG), Asp-167, Gly-180, and Asn-277 each bind substrate. Asp-305 provides a ligand contact to Fe cation.

Belongs to the KAE1 / TsaD family. It depends on Fe(2+) as a cofactor.

The protein resides in the cytoplasm. The enzyme catalyses L-threonylcarbamoyladenylate + adenosine(37) in tRNA = N(6)-L-threonylcarbamoyladenosine(37) in tRNA + AMP + H(+). Functionally, required for the formation of a threonylcarbamoyl group on adenosine at position 37 (t(6)A37) in tRNAs that read codons beginning with adenine. Is involved in the transfer of the threonylcarbamoyl moiety of threonylcarbamoyl-AMP (TC-AMP) to the N6 group of A37, together with TsaE and TsaB. TsaD likely plays a direct catalytic role in this reaction. The protein is tRNA N6-adenosine threonylcarbamoyltransferase of Chromobacterium violaceum (strain ATCC 12472 / DSM 30191 / JCM 1249 / CCUG 213 / NBRC 12614 / NCIMB 9131 / NCTC 9757 / MK).